Here is a 107-residue protein sequence, read N- to C-terminus: Nucleoid-associated protein RT0857 (107 aa).

It belongs to the YbaB/EbfC family. As to quaternary structure, homodimer.

It localises to the cytoplasm. The protein resides in the nucleoid. In terms of biological role, binds to DNA and alters its conformation. May be involved in regulation of gene expression, nucleoid organization and DNA protection. The polypeptide is Nucleoid-associated protein RT0857 (Rickettsia typhi (strain ATCC VR-144 / Wilmington)).